Here is a 662-residue protein sequence, read N- to C-terminus: Polyadenylate-binding protein 4 (662 aa).

A disordered region spans residues 1 to 23; the sequence is MAQVQAPSSHSPPPPAVVNDGAA. RRM domains are found at residues 46 to 124, 134 to 211, 225 to 302, and 328 to 405; these read CSLY…YSSR, GNLF…PFLR, TNVY…KAQK, and LNLY…LAQR. 2 stretches are compositionally biased toward low complexity: residues 480–489 and 506–518; these read PMMQPGQQGP and QQPM…QMMP. 2 disordered regions span residues 480–518 and 634–662; these read PMMQ…QMMP and NQPS…NDHL. The PABC domain occupies 558–635; the sequence is SAGQLATSLA…ALDVLRNVNQ (78 aa). Residues 634-649 are compositionally biased toward polar residues; that stretch reads NQPSSQGSEGNKSGSP.

Belongs to the polyadenylate-binding protein type-1 family. Interacts with ERD15/CID1. Interacts with Turnip mosaic virus (TuMV) VPg-Pro.

It localises to the cytoplasm. Its subcellular location is the nucleus. In terms of biological role, binds the poly(A) tail of mRNA. Appears to be an important mediator of the multiple roles of the poly(A) tail in mRNA biogenesis, stability and translation. During infection with potyvirus TuMV, acts as a potential integral component of the viral replicase complex that could play an important role in the regulation of potyviral RNA-dependent RNA polymerase (RdRp). The chain is Polyadenylate-binding protein 4 (PAB4) from Arabidopsis thaliana (Mouse-ear cress).